The chain runs to 204 residues: Heart- and neural crest derivatives-expressed protein 1 (204 aa).

Disordered stretches follow at residues 1-24 (MNLVGSYAHHHHHHHHHHHPHPAH), 57-115 (APDF…RTES), and 172-204 (LKKADGGRESKRKRELQQHEGFPPALGPGEKRD). Basic residues-rich tracts occupy residues 8–22 (AHHHHHHHHHHHPHP) and 98–110 (LGRRKGSGPKKER). Residues 100-152 (RRKGSGPKKERRRTESINSAFAELRECIPNVPADTKLSKIKTLRLATSYIAYL) enclose the bHLH domain. At Thr-113 the chain carries Phosphothreonine; by PLK4. Ser-115 bears the Phosphoserine; by PLK4 mark.

As to quaternary structure, efficient DNA binding requires dimerization with another bHLH protein. Forms homodimers and heterodimers with TCF3 gene products E12 and E47, HAND2 and HEY1, HEY2 and HEYL (hairy-related transcription factors). Interacts with MDFIC. Interacts with SOX15; the interaction enhances HAND1-induced differentiation of trophoblast giant cells. In terms of processing, phosphorylation by PLK4 disrupts the interaction with MDFIC and leads to translocation into the nucleoplasm, allowing dimerization and transcription factor activity.

It localises to the nucleus. It is found in the nucleoplasm. The protein resides in the nucleolus. Transcription factor that plays an essential role in both trophoblast giant cell differentiation and in cardiac morphogenesis. Binds the DNA sequence 5'-NRTCTG-3' (non-canonical E-box). Acts as a transcriptional repressor of SOX15. In the adult, could be required for ongoing expression of cardiac-specific genes. The sequence is that of Heart- and neural crest derivatives-expressed protein 1 (HAND1) from Ovis aries (Sheep).